The chain runs to 645 residues: Transcription factor AN6788 (645 aa).

The segment at Met-1–Pro-21 is disordered. The zn(2)-C6 fungal-type DNA-binding region spans Cys-25–Cys-52. The span at Pro-113 to Gln-131 shows a compositional bias: basic and acidic residues. A disordered region spans residues Pro-113–Ser-170.

Its subcellular location is the nucleus. Functionally, transcription factors AN6788 and AN6790 act in tandem to regulate the expression of the non-reducing polyketide synthase pkfA from the aspernidine A biosynthesis cluster. They do not control the expression of the other genes involved in aspernidine A biosynthesis, nor do they regulate the expression of the highly reducing polyketide synthase AN6791 and the esterase AN6793 with which they are predicted to form a secondary metabolite biosynthesis cluster. This chain is Transcription factor AN6788, found in Emericella nidulans (strain FGSC A4 / ATCC 38163 / CBS 112.46 / NRRL 194 / M139) (Aspergillus nidulans).